The primary structure comprises 493 residues: Xylulose kinase (493 aa).

Residue 84–85 coordinates substrate; that stretch reads QH. Catalysis depends on D247, which acts as the Proton acceptor.

Belongs to the FGGY kinase family.

The catalysed reaction is D-xylulose + ATP = D-xylulose 5-phosphate + ADP + H(+). Catalyzes the phosphorylation of D-xylulose to D-xylulose 5-phosphate. The chain is Xylulose kinase from Haemophilus influenzae (strain ATCC 51907 / DSM 11121 / KW20 / Rd).